Reading from the N-terminus, the 57-residue chain is MLRWSSTYTFGLLWLIIGSEAFHLNALKQDHLERMKQYDAKIRLAKHEFDDTSNETK.

The helical transmembrane segment at 10–27 threads the bilayer; sequence FGLLWLIIGSEAFHLNAL. Residues 28-55 are a coiled coil; the sequence is KQDHLERMKQYDAKIRLAKHEFDDTSNE.

Its subcellular location is the membrane. This is an uncharacterized protein from Schizosaccharomyces pombe (strain 972 / ATCC 24843) (Fission yeast).